Reading from the N-terminus, the 256-residue chain is MKPLELDVFLCRTDNFGVLVHDPETGFTAAIDAPEEAPILEAATRRGWKITHIFTTHHHTDHVTANLALKEQFGCEIIGPINEAVAIPGLDRAMADGDSFLFGDHTVNVIETPGHTAGHICYHFVDDKLLFAADTLFALGCGRLFERPAADMWHSLQKLAVLPDETAVYFGHEYTLSNARFALTVDPDNERLKSRAAEIEALRADGKFTIPTTLGLEKETNPFLRAADPAIRRNLVMEGKTNEEVFAEIRKRKDHF.

The Zn(2+) site is built by H57, H59, D61, H62, H115, D134, and H172.

It belongs to the metallo-beta-lactamase superfamily. Glyoxalase II family. In terms of assembly, monomer. Requires Zn(2+) as cofactor.

The enzyme catalyses an S-(2-hydroxyacyl)glutathione + H2O = a 2-hydroxy carboxylate + glutathione + H(+). It functions in the pathway secondary metabolite metabolism; methylglyoxal degradation; (R)-lactate from methylglyoxal: step 2/2. Functionally, thiolesterase that catalyzes the hydrolysis of S-D-lactoyl-glutathione to form glutathione and D-lactic acid. The protein is Hydroxyacylglutathione hydrolase of Rhizobium johnstonii (strain DSM 114642 / LMG 32736 / 3841) (Rhizobium leguminosarum bv. viciae).